Reading from the N-terminus, the 449-residue chain is UDP-N-acetylmuramoylalanine--D-glutamate ligase (449 aa).

Position 107 to 113 (Gly107 to Thr113) interacts with ATP.

This sequence belongs to the MurCDEF family.

Its subcellular location is the cytoplasm. It catalyses the reaction UDP-N-acetyl-alpha-D-muramoyl-L-alanine + D-glutamate + ATP = UDP-N-acetyl-alpha-D-muramoyl-L-alanyl-D-glutamate + ADP + phosphate + H(+). It functions in the pathway cell wall biogenesis; peptidoglycan biosynthesis. Functionally, cell wall formation. Catalyzes the addition of glutamate to the nucleotide precursor UDP-N-acetylmuramoyl-L-alanine (UMA). The protein is UDP-N-acetylmuramoylalanine--D-glutamate ligase of Hydrogenovibrio crunogenus (strain DSM 25203 / XCL-2) (Thiomicrospira crunogena).